Reading from the N-terminus, the 928-residue chain is BCAS3 microtubule associated cell migration factor (928 aa).

M1 carries the post-translational modification N-acetylmethionine. K215 is covalently cross-linked (Glycyl lysine isopeptide (Lys-Gly) (interchain with G-Cter in SUMO1); alternate). K215 participates in a covalent cross-link: Glycyl lysine isopeptide (Lys-Gly) (interchain with G-Cter in SUMO2); alternate. Required for recruitment to preautophagosomal structure in response to mitophagy regions lie at residues 254–312 (RGGA…SRRS) and 437–560 (YGGQ…IKAP). Phosphoserine occurs at positions 461, 480, and 488. Disordered regions lie at residues 472 to 518 (TSKQ…PRLS) and 795 to 816 (VRSD…RGVS). Composition is skewed to low complexity over residues 480–494 (SPVP…GSPL) and 505–514 (NNFTNNNPGN). Residues S838, S886, and S898 each carry the phosphoserine modification. The segment at 868–928 (ESPSRDVVGS…PLSLFPTGFP (61 aa)) is disordered. Positions 887–901 (IETLSNSSGSTSGSI) are enriched in low complexity.

It belongs to the BCAS3 family. In terms of assembly, interacts with histone H3, ESR1, KAT2B and PELP1; the interactions occur in a estrogen-dependent manner. Interacts with beta-tubulin and VIM. Interacts (via C-terminal) with PHAF1; the interaction is requrired for the association with the phagophore. In terms of tissue distribution, expressed in blood islands and yolk sac blood islands (at protein level). Highly expressed in mammary tumors. Expressed in eostrogen-induced epithelial cells of mammary glands. Expressed in brain, heart, kidney, lung, liver and spleen. Expressed in embryonic stem cells, embryoid bodies, endothelial cells and fibroblasts.

Its subcellular location is the nucleus. It localises to the cytoplasm. It is found in the cytoskeleton. The protein localises to the preautophagosomal structure. Functions synergistically with PELP1 as a transcriptional coactivator of estrogen receptor-responsive genes. Stimulates histone acetyltransferase activity. Binds to chromatin. Plays a role in angiogenesis. Participates in the regulation of cell polarity and directional endothelial cell migration by mediating both the activation and recruitment of CDC42 and the reorganization of the actin cytoskeleton at the cell leading edge. Promotes filipodia formation. Plays a regulatory role in autophagic activity. In complex with PHAF1, associates with the preautophagosomal structure during both non-selective and selective autophagy. Probably binds phosphatidylinositol 3-phosphate (PtdIns3P) which would mediate the recruitment preautophagosomal structures. The protein is BCAS3 microtubule associated cell migration factor of Mus musculus (Mouse).